A 110-amino-acid polypeptide reads, in one-letter code: Neural hemoglobin (110 aa).

Positions 2-110 constitute a Globin domain; sequence VNWAAVVDDF…HAIDDILSHL (109 aa). Heme is bound at residue histidine 70.

The protein belongs to the globin family. Homotetramer. Self-associates in the deoxy state. Seems to dissociate upon oxygenation.

Acts as an oxygen store capable of sustaining neuronal activity in an anoxic environment for 5 to 30 minutes. The protein is Neural hemoglobin of Cerebratulus lacteus (Milky ribbon worm).